Consider the following 227-residue polypeptide: PKHD-type hydroxylase Bcep18194_B0892 (227 aa).

The Fe2OG dioxygenase domain maps to 78-178; that stretch reads KVFPPLFNRY…RVASFFWIQS (101 aa). Fe cation contacts are provided by His96, Asp98, and His159. Position 169 (Arg169) interacts with 2-oxoglutarate.

Fe(2+) is required as a cofactor. L-ascorbate serves as cofactor.

This Burkholderia lata (strain ATCC 17760 / DSM 23089 / LMG 22485 / NCIMB 9086 / R18194 / 383) protein is PKHD-type hydroxylase Bcep18194_B0892.